Here is a 452-residue protein sequence, read N- to C-terminus: MSHNVTPNTSRVELRKTLTLVPVVMMGLAYMQPMTLFDTFGIVSGLTDGHVPTAYAFALIAILFTALSYGKLVRRYPSAGSAYTYAQKSISPTVGFMVGWSSLLDYLFAPMINILLAKIYFEALVPSIPSWMFVVALVAFMTAFNLRSLKSVANFNTVIVVLQVVLIAVILGMVVYGVFEGEGAGTLASTRPFWSGDAHVIPMITGATILCFSFTGFDGISNLSEETKDAERVIPRAIFLTALIGGMIFIFATYFLQLYFPDISRFKDPDASQPEIMLYVAGKAFQVGALIFSTITVLASGMAAHAGVARLMYVMGRDGVFPKSFFGYVHPKWRTPAMNIILVGAIALLAINFDLVMATALINFGALVAFTFVNLSVISQFWIREKRNKTLKDHFQYLFLPMCGALTVGALWVNLEESSMVLGLIWAAIGLIYLACVTKSFRNPVPQYEDVA.

The Cytoplasmic portion of the chain corresponds to 1-16 (MSHNVTPNTSRVELRK). The chain crosses the membrane as a helical span at residues 17 to 37 (TLTLVPVVMMGLAYMQPMTLF). Over 38 to 48 (DTFGIVSGLTD) the chain is Periplasmic. Residues 49–69 (GHVPTAYAFALIAILFTALSY) traverse the membrane as a helical segment. The Cytoplasmic segment spans residues 70–95 (GKLVRRYPSAGSAYTYAQKSISPTVG). Residues 96–116 (FMVGWSSLLDYLFAPMINILL) traverse the membrane as a helical segment. Over 117–123 (AKIYFEA) the chain is Periplasmic. Residues 124 to 144 (LVPSIPSWMFVVALVAFMTAF) traverse the membrane as a helical segment. The Cytoplasmic portion of the chain corresponds to 145-158 (NLRSLKSVANFNTV). A helical membrane pass occupies residues 159 to 179 (IVVLQVVLIAVILGMVVYGVF). At 180–199 (EGEGAGTLASTRPFWSGDAH) the chain is on the periplasmic side. Residues 200 to 220 (VIPMITGATILCFSFTGFDGI) form a helical membrane-spanning segment. The Cytoplasmic segment spans residues 221–237 (SNLSEETKDAERVIPRA). Residues 238-258 (IFLTALIGGMIFIFATYFLQL) traverse the membrane as a helical segment. Topologically, residues 259–283 (YFPDISRFKDPDASQPEIMLYVAGK) are periplasmic. Residues 284 to 304 (AFQVGALIFSTITVLASGMAA) traverse the membrane as a helical segment. At 305-339 (HAGVARLMYVMGRDGVFPKSFFGYVHPKWRTPAMN) the chain is on the cytoplasmic side. 2 consecutive transmembrane segments (helical) span residues 340-360 (IILV…MATA) and 361-381 (LINF…ISQF). Residues 382–394 (WIREKRNKTLKDH) are Cytoplasmic-facing. A helical transmembrane segment spans residues 395–415 (FQYLFLPMCGALTVGALWVNL). Over 416–417 (EE) the chain is Periplasmic. The helical transmembrane segment at 418-438 (SSMVLGLIWAAIGLIYLACVT) threads the bilayer. Residues 439–452 (KSFRNPVPQYEDVA) lie on the Cytoplasmic side of the membrane.

This sequence belongs to the amino acid-polyamine-organocation (APC) superfamily.

It is found in the cell inner membrane. It catalyses the reaction putrescine(in) + H(+)(in) = putrescine(out) + H(+)(out). Functionally, putrescine importer. The protein is Low-affinity putrescine importer PlaP (plaP) of Escherichia coli O157:H7.